Reading from the N-terminus, the 332-residue chain is Homoserine kinase (332 aa).

This sequence belongs to the pseudomonas-type ThrB family.

The catalysed reaction is L-homoserine + ATP = O-phospho-L-homoserine + ADP + H(+). The protein operates within amino-acid biosynthesis; L-threonine biosynthesis; L-threonine from L-aspartate: step 4/5. The polypeptide is Homoserine kinase (Burkholderia multivorans (strain ATCC 17616 / 249)).